The following is a 365-amino-acid chain: MAGNSIGQLFKVSTFGESHGVALGGVVDGTPAGLEITEADLQIDLDRRKPGQSRYTTQRREDDQIKILSGVFEGKTTGTSIGLLIENTDQRSKDYGKIKDVFRPGHGDYTYWHKYGLRDYRGGGRSSARETAIRVAAGSIAKKYLKQFHGIEIKACLSQLGPIKADVFDWNEVENNLFFFPDVSKLEALDEYMRGLKKQGDSVGAKVKVVASNVPVGLGEPVFDRLDAELAHSLMSINAVKGVEIGDGFDVIEQKGSEHRDELTPNGFTSNHAGGVLAGISTGQDIIASIALKPTSSITIPGNSINTENEAVEMITKGRHDPCVGIRAVPIAEAMMAITLMDHLLRQRGQNPHVHHEHGPIPGSV.

2 residues coordinate NADP(+): Arg-48 and Arg-54. Residues 125 to 127, 238 to 239, Ala-278, 293 to 297, and Arg-319 each bind FMN; these read RSS, NA, and KPTSS.

The protein belongs to the chorismate synthase family. In terms of assembly, homotetramer. It depends on FMNH2 as a cofactor.

It carries out the reaction 5-O-(1-carboxyvinyl)-3-phosphoshikimate = chorismate + phosphate. Its pathway is metabolic intermediate biosynthesis; chorismate biosynthesis; chorismate from D-erythrose 4-phosphate and phosphoenolpyruvate: step 7/7. Functionally, catalyzes the anti-1,4-elimination of the C-3 phosphate and the C-6 proR hydrogen from 5-enolpyruvylshikimate-3-phosphate (EPSP) to yield chorismate, which is the branch point compound that serves as the starting substrate for the three terminal pathways of aromatic amino acid biosynthesis. This reaction introduces a second double bond into the aromatic ring system. The sequence is that of Chorismate synthase from Pseudoalteromonas translucida (strain TAC 125).